We begin with the raw amino-acid sequence, 272 residues long: Regulatory protein RecX (272 aa).

It belongs to the RecX family.

It localises to the cytoplasm. Functionally, modulates RecA activity. The sequence is that of Regulatory protein RecX from Staphylococcus aureus (strain Newman).